The following is a 168-amino-acid chain: Short form salivary protein D7R2 (168 aa).

An N-terminal signal peptide occupies residues 1–21 (MFKKLLLSVGLVWCLISLGQA). 3 disulfide bridges follow: Cys-30-Cys-62, Cys-43-Cys-168, and Cys-101-Cys-120. The noradrenaline site is built by Glu-31 and Arg-46. Glu-31 provides a ligand contact to serotonin. Serotonin contacts are provided by His-59, Tyr-118, Asp-135, and Glu-138. Histamine-binding residues include Tyr-118, Asp-135, and Glu-138. 2 residues coordinate noradrenaline: Asp-135 and Glu-138.

It belongs to the PBP/GOBP family. In terms of tissue distribution, female saliva (at protein level). Female salivary gland. Not detected in female carcass without salivary glands. Not detected in male tissues.

Its subcellular location is the secreted. Its function is as follows. Modulates blood feeding of female mosquitoes on vertebrate species by binding and sequestering different mediators involved in the host response. Binds serotonin, noradrenaline, histamine and adrenaline. Inhibits histamine-, serotonin- and noradrenaline-induced smooth muscle contraction. Exhibits vasodilating activity. The sequence is that of Short form salivary protein D7R2 from Anopheles gambiae (African malaria mosquito).